Consider the following 290-residue polypeptide: UPF0761 membrane protein YihY (290 aa).

Transmembrane regions (helical) follow at residues 44 to 64, 104 to 124, 140 to 160, 183 to 203, 210 to 230, and 244 to 264; these read LLSL…FPMF, VGAC…DSAL, FAVY…SLAI, ILPL…VPTT, ALVG…GFAL, and VLAV…IVLL.

The protein belongs to the UPF0761 family.

Its subcellular location is the cell inner membrane. The sequence is that of UPF0761 membrane protein YihY from Salmonella paratyphi B (strain ATCC BAA-1250 / SPB7).